The following is a 430-amino-acid chain: Serine--tRNA ligase (430 aa).

237-239 is an L-serine binding site; sequence TAE. 268–270 serves as a coordination point for ATP; sequence RSE. Glu-291 contributes to the L-serine binding site. ATP is bound at residue 355-358; that stretch reads EISS. L-serine is bound at residue Ser-391.

The protein belongs to the class-II aminoacyl-tRNA synthetase family. Type-1 seryl-tRNA synthetase subfamily. In terms of assembly, homodimer. The tRNA molecule binds across the dimer.

It localises to the cytoplasm. It carries out the reaction tRNA(Ser) + L-serine + ATP = L-seryl-tRNA(Ser) + AMP + diphosphate + H(+). The enzyme catalyses tRNA(Sec) + L-serine + ATP = L-seryl-tRNA(Sec) + AMP + diphosphate + H(+). Its pathway is aminoacyl-tRNA biosynthesis; selenocysteinyl-tRNA(Sec) biosynthesis; L-seryl-tRNA(Sec) from L-serine and tRNA(Sec): step 1/1. Functionally, catalyzes the attachment of serine to tRNA(Ser). Is also able to aminoacylate tRNA(Sec) with serine, to form the misacylated tRNA L-seryl-tRNA(Sec), which will be further converted into selenocysteinyl-tRNA(Sec). The protein is Serine--tRNA ligase of Shigella dysenteriae serotype 1 (strain Sd197).